A 421-amino-acid polypeptide reads, in one-letter code: Histidine--tRNA ligase (421 aa).

It belongs to the class-II aminoacyl-tRNA synthetase family. In terms of assembly, homodimer.

Its subcellular location is the cytoplasm. The enzyme catalyses tRNA(His) + L-histidine + ATP = L-histidyl-tRNA(His) + AMP + diphosphate + H(+). The sequence is that of Histidine--tRNA ligase from Caldicellulosiruptor bescii (strain ATCC BAA-1888 / DSM 6725 / KCTC 15123 / Z-1320) (Anaerocellum thermophilum).